Reading from the N-terminus, the 553-residue chain is LIM domain-containing protein B (553 aa).

Positions 43–115 (LTYKDPNVST…SINNNISNNN (73 aa)) are disordered. Low complexity predominate over residues 99–114 (GPGLPNNSINNNISNN). LIM zinc-binding domains lie at 205–262 (PICG…ELFS), 263–322 (PRCF…RQKR), 328–387 (EICS…KQIL), 388–447 (NICG…FFGR), and 448–505 (QCFK…LPKE). Residues 534–553 (ELKKERERAAKEKEKESKAK) are disordered.

It localises to the cytoplasm. The protein localises to the cell cortex. Its subcellular location is the cytoskeleton. Regulates and controls rearrangements of the actin cytoskeleton. Required for tip formation, morphogenesis, cell adhesion and motility, chemotaxis and aggregates formation. May function downstream of paxB. This Dictyostelium discoideum (Social amoeba) protein is LIM domain-containing protein B (limB).